Here is a 477-residue protein sequence, read N- to C-terminus: Angiotensinogen (477 aa).

An N-terminal signal peptide occupies residues 1–24 (MTPTGAGLKATIFCILTWVSLTAG). A disulfide bond links Cys-42 and Cys-161. N-linked (GlcNAc...) asparagine glycans are attached at residues Asn-295 and Asn-319.

It belongs to the serpin family. In response to low blood pressure, the enzyme renin/REN cleaves angiotensinogen to produce angiotensin-1. Angiotensin-1 is a substrate of ACE (angiotensin converting enzyme) that removes a dipeptide to yield the physiologically active peptide angiotensin-2. Angiotensin-1 and angiotensin-2 can be further processed to generate angiotensin-3, angiotensin-4. Angiotensin 1-9 is cleaved from angiotensin-1 by ACE2 and can be further processed by ACE to produce angiotensin 1-7, angiotensin 1-5 and angiotensin 1-4. Angiotensin 1-7 has also been proposed to be cleaved from angiotensin-2 by ACE2 or from angiotensin-1 by MME (neprilysin). In terms of processing, the disulfide bond is labile. Angiotensinogen is present in the circulation in a near 40:60 ratio with the oxidized disulfide-bonded form, which preferentially interacts with receptor-bound renin.

The protein localises to the secreted. Essential component of the renin-angiotensin system (RAS), a potent regulator of blood pressure, body fluid and electrolyte homeostasis. In terms of biological role, acts directly on vascular smooth muscle as a potent vasoconstrictor, affects cardiac contractility and heart rate through its action on the sympathetic nervous system, and alters renal sodium and water absorption through its ability to stimulate the zona glomerulosa cells of the adrenal cortex to synthesize and secrete aldosterone. Acts by binding to angiotensin receptors AGTR1 and AGTR2. Also binds the DEAR/FBXW7-AS1 receptor. Its function is as follows. Stimulates aldosterone release. Functionally, is a ligand for the G-protein coupled receptor MAS1. Has vasodilator and antidiuretic effects. Has an antithrombotic effect that involves MAS1-mediated release of nitric oxide from platelets. This is Angiotensinogen (Agt) from Rattus norvegicus (Rat).